A 398-amino-acid polypeptide reads, in one-letter code: ATP-dependent RNA helicase eIF4A (398 aa).

Positions 25–53 (DSFDSMDLKPELLRGIYAYGFERPSAIQQ) match the Q motif motif. Residues 56–226 (IMPIIKGSDV…TKFMRDPVRI (171 aa)) form the Helicase ATP-binding domain. 69-76 (AQSGTGKT) is a binding site for ATP. The short motif at 174–177 (DEAD) is the DEAD box element. One can recognise a Helicase C-terminal domain in the interval 237-398 (GIKQFYIAVE…EMPMNVADLI (162 aa)).

This sequence belongs to the DEAD box helicase family. eIF4A subfamily. Component of the eIF4F complex, which composition varies with external and internal environmental conditions. It is composed of at least eIF4A, eIF4E and eIF4G.

It localises to the cytoplasm. It catalyses the reaction ATP + H2O = ADP + phosphate + H(+). In terms of biological role, ATP-dependent RNA helicase which is a subunit of the eIF4F complex involved in cap recognition and is required for mRNA binding to ribosome. In the current model of translation initiation, eIF4A unwinds RNA secondary structures in the 5'-UTR of mRNAs which is necessary to allow efficient binding of the small ribosomal subunit, and subsequent scanning for the initiator codon. In Aspergillus clavatus (strain ATCC 1007 / CBS 513.65 / DSM 816 / NCTC 3887 / NRRL 1 / QM 1276 / 107), this protein is ATP-dependent RNA helicase eIF4A (tif1).